A 383-amino-acid polypeptide reads, in one-letter code: Anhydro-N-acetylmuramic acid kinase (383 aa).

An ATP-binding site is contributed by 9-16 (GTSLDGID).

Belongs to the anhydro-N-acetylmuramic acid kinase family.

It catalyses the reaction 1,6-anhydro-N-acetyl-beta-muramate + ATP + H2O = N-acetyl-D-muramate 6-phosphate + ADP + H(+). The protein operates within amino-sugar metabolism; 1,6-anhydro-N-acetylmuramate degradation. Its pathway is cell wall biogenesis; peptidoglycan recycling. Its function is as follows. Catalyzes the specific phosphorylation of 1,6-anhydro-N-acetylmuramic acid (anhMurNAc) with the simultaneous cleavage of the 1,6-anhydro ring, generating MurNAc-6-P. Is required for the utilization of anhMurNAc either imported from the medium or derived from its own cell wall murein, and thus plays a role in cell wall recycling. This chain is Anhydro-N-acetylmuramic acid kinase, found in Bacillus cereus (strain ATCC 10987 / NRS 248).